A 566-amino-acid chain; its full sequence is Sulfite reductase [NADPH] hemoprotein beta-component (566 aa).

[4Fe-4S] cluster-binding residues include Cys-430, Cys-436, Cys-475, and Cys-479. Cys-479 is a siroheme binding site.

Belongs to the nitrite and sulfite reductase 4Fe-4S domain family. As to quaternary structure, alpha(8)-beta(8). The alpha component is a flavoprotein, the beta component is a hemoprotein. It depends on siroheme as a cofactor. [4Fe-4S] cluster serves as cofactor.

The catalysed reaction is hydrogen sulfide + 3 NADP(+) + 3 H2O = sulfite + 3 NADPH + 4 H(+). The protein operates within sulfur metabolism; hydrogen sulfide biosynthesis; hydrogen sulfide from sulfite (NADPH route): step 1/1. Functionally, component of the sulfite reductase complex that catalyzes the 6-electron reduction of sulfite to sulfide. This is one of several activities required for the biosynthesis of L-cysteine from sulfate. The protein is Sulfite reductase [NADPH] hemoprotein beta-component of Baumannia cicadellinicola subsp. Homalodisca coagulata.